The following is a 303-amino-acid chain: Aspartate carbamoyltransferase catalytic subunit (303 aa).

Residues arginine 51 and threonine 52 each contribute to the carbamoyl phosphate site. Position 80 (lysine 80) interacts with L-aspartate. Arginine 101, histidine 129, and glutamine 132 together coordinate carbamoyl phosphate. 2 residues coordinate L-aspartate: arginine 162 and arginine 221. Carbamoyl phosphate is bound by residues leucine 260 and proline 261.

Belongs to the aspartate/ornithine carbamoyltransferase superfamily. ATCase family. In terms of assembly, heterooligomer of catalytic and regulatory chains.

The catalysed reaction is carbamoyl phosphate + L-aspartate = N-carbamoyl-L-aspartate + phosphate + H(+). Its pathway is pyrimidine metabolism; UMP biosynthesis via de novo pathway; (S)-dihydroorotate from bicarbonate: step 2/3. Functionally, catalyzes the condensation of carbamoyl phosphate and aspartate to form carbamoyl aspartate and inorganic phosphate, the committed step in the de novo pyrimidine nucleotide biosynthesis pathway. This chain is Aspartate carbamoyltransferase catalytic subunit, found in Saccharolobus islandicus (strain M.16.4 / Kamchatka #3) (Sulfolobus islandicus).